Reading from the N-terminus, the 256-residue chain is Deoxyribose-phosphate aldolase (256 aa).

Catalysis depends on Asp-102, which acts as the Proton donor/acceptor. Residue Lys-165 is the Schiff-base intermediate with acetaldehyde of the active site. The active-site Proton donor/acceptor is the Lys-197.

This sequence belongs to the DeoC/FbaB aldolase family. DeoC type 2 subfamily.

Its subcellular location is the cytoplasm. The enzyme catalyses 2-deoxy-D-ribose 5-phosphate = D-glyceraldehyde 3-phosphate + acetaldehyde. The protein operates within carbohydrate degradation; 2-deoxy-D-ribose 1-phosphate degradation; D-glyceraldehyde 3-phosphate and acetaldehyde from 2-deoxy-alpha-D-ribose 1-phosphate: step 2/2. Functionally, catalyzes a reversible aldol reaction between acetaldehyde and D-glyceraldehyde 3-phosphate to generate 2-deoxy-D-ribose 5-phosphate. This chain is Deoxyribose-phosphate aldolase, found in Shewanella oneidensis (strain ATCC 700550 / JCM 31522 / CIP 106686 / LMG 19005 / NCIMB 14063 / MR-1).